Consider the following 178-residue polypeptide: Interleukin-10 (178 aa).

The first 18 residues, 1-18 (MHSSALLCCLVLLTGVRA), serve as a signal peptide directing secretion. Cystine bridges form between cysteine 30-cysteine 126 and cysteine 80-cysteine 132. Asparagine 134 carries N-linked (GlcNAc...) asparagine glycosylation.

This sequence belongs to the IL-10 family. Homodimer. Interacts with IL10RA and IL10RB.

The protein localises to the secreted. Its function is as follows. Major immune regulatory cytokine that acts on many cells of the immune system where it has profound anti-inflammatory functions, limiting excessive tissue disruption caused by inflammation. Mechanistically, IL10 binds to its heterotetrameric receptor comprising IL10RA and IL10RB leading to JAK1 and STAT2-mediated phosphorylation of STAT3. In turn, STAT3 translocates to the nucleus where it drives expression of anti-inflammatory mediators. Targets antigen-presenting cells (APCs) such as macrophages and monocytes and inhibits their release of pro-inflammatory cytokines including granulocyte-macrophage colony-stimulating factor /GM-CSF, granulocyte colony-stimulating factor/G-CSF, IL-1 alpha, IL-1 beta, IL-6, IL-8 and TNF-alpha. Also interferes with antigen presentation by reducing the expression of MHC-class II and co-stimulatory molecules, thereby inhibiting their ability to induce T cell activation. In addition, controls the inflammatory response of macrophages by reprogramming essential metabolic pathways including mTOR signaling. The chain is Interleukin-10 (IL10) from Pan troglodytes (Chimpanzee).